Here is a 190-residue protein sequence, read N- to C-terminus: Holliday junction branch migration complex subunit RuvA (190 aa).

A domain I region spans residues 1–64 (MIGRITGTLI…EDAQLLYGFG (64 aa)). Residues 65-137 (SSAERSTFRE…MRGKLGADIG (73 aa)) form a domain II region. Residues 137-141 (GATPH) form a flexible linker region. The tract at residues 142–190 (AASGHQSDILNALLALGYSDKESQAALKKLPDGVDVSEGIRLALKALVR) is domain III.

The protein belongs to the RuvA family. In terms of assembly, homotetramer. Forms an RuvA(8)-RuvB(12)-Holliday junction (HJ) complex. HJ DNA is sandwiched between 2 RuvA tetramers; dsDNA enters through RuvA and exits via RuvB. An RuvB hexamer assembles on each DNA strand where it exits the tetramer. Each RuvB hexamer is contacted by two RuvA subunits (via domain III) on 2 adjacent RuvB subunits; this complex drives branch migration. In the full resolvosome a probable DNA-RuvA(4)-RuvB(12)-RuvC(2) complex forms which resolves the HJ.

It localises to the cytoplasm. Its function is as follows. The RuvA-RuvB-RuvC complex processes Holliday junction (HJ) DNA during genetic recombination and DNA repair, while the RuvA-RuvB complex plays an important role in the rescue of blocked DNA replication forks via replication fork reversal (RFR). RuvA specifically binds to HJ cruciform DNA, conferring on it an open structure. The RuvB hexamer acts as an ATP-dependent pump, pulling dsDNA into and through the RuvAB complex. HJ branch migration allows RuvC to scan DNA until it finds its consensus sequence, where it cleaves and resolves the cruciform DNA. The polypeptide is Holliday junction branch migration complex subunit RuvA (Bordetella pertussis (strain Tohama I / ATCC BAA-589 / NCTC 13251)).